We begin with the raw amino-acid sequence, 55 residues long: Large ribosomal subunit protein bL33 (55 aa).

It belongs to the bacterial ribosomal protein bL33 family.

The chain is Large ribosomal subunit protein bL33 from Leifsonia xyli subsp. xyli (strain CTCB07).